The chain runs to 136 residues: MAKKSSSRLPKRKGEYTYRGKTVSELQELSLEEFAELLPSRERRSIKRGFTDGQKKVLHEFKEGKKVRTHHRDLIILPEMIGQTIEIHNGKGFVSVDLQPEMIGHRFGEFAPTRSRVSHGSAGVGATRSSKFVPLK.

A disordered region spans residues 114–136 (RSRVSHGSAGVGATRSSKFVPLK).

This sequence belongs to the universal ribosomal protein uS19 family.

Its function is as follows. Protein S19 forms a complex with S13 that binds strongly to the 16S ribosomal RNA. In Methanosarcina barkeri (strain Fusaro / DSM 804), this protein is Small ribosomal subunit protein uS19.